The primary structure comprises 178 residues: Nascent polypeptide-associated complex subunit alpha (178 aa).

The NAC-A/B domain occupies 20–84 (SKNEKKAREL…AKVDDMNKRI (65 aa)). Residues 87–104 (AQAQQEQQEALTKAAADA) show a composition bias toward low complexity. A disordered region spans residues 87–142 (AQAQQEQQEALTKAAADAETADKSPESITNDLQNASLEDKTVEEDEGEVDETGLDS). Positions 112–122 (ESITNDLQNAS) are enriched in polar residues. A compositionally biased stretch (acidic residues) spans 127 to 139 (TVEEDEGEVDETG). One can recognise a UBA domain in the interval 140–178 (LDSKDIEIIVEQTQVSRAKAVKALRAHKGDMVNAIMELS).

Belongs to the NAC-alpha family. In terms of assembly, part of the nascent polypeptide-associated complex (NAC), consisting of EGD2 and EGD1. NAC associates with ribosomes via EGD1.

The protein resides in the cytoplasm. Its subcellular location is the nucleus. Its function is as follows. Component of the nascent polypeptide-associated complex (NAC), a dynamic component of the ribosomal exit tunnel, protecting the emerging polypeptides from interaction with other cytoplasmic proteins to ensure appropriate nascent protein targeting. The NAC complex also promotes mitochondrial protein import by enhancing productive ribosome interactions with the outer mitochondrial membrane and blocks the inappropriate interaction of ribosomes translating non-secretory nascent polypeptides with translocation sites in the membrane of the endoplasmic reticulum. EGD2 may also be involved in transcription regulation. The chain is Nascent polypeptide-associated complex subunit alpha (EGD2) from Meyerozyma guilliermondii (strain ATCC 6260 / CBS 566 / DSM 6381 / JCM 1539 / NBRC 10279 / NRRL Y-324) (Yeast).